The sequence spans 309 residues: 4-hydroxy-3-methylbut-2-enyl diphosphate reductase (309 aa).

Residue Cys13 participates in [4Fe-4S] cluster binding. (2E)-4-hydroxy-3-methylbut-2-enyl diphosphate contacts are provided by His42 and His75. Residues His42 and His75 each coordinate dimethylallyl diphosphate. Isopentenyl diphosphate contacts are provided by His42 and His75. [4Fe-4S] cluster is bound at residue Cys97. Residue His125 coordinates (2E)-4-hydroxy-3-methylbut-2-enyl diphosphate. His125 serves as a coordination point for dimethylallyl diphosphate. Residue His125 coordinates isopentenyl diphosphate. Catalysis depends on Glu127, which acts as the Proton donor. Thr165 contributes to the (2E)-4-hydroxy-3-methylbut-2-enyl diphosphate binding site. Cys195 contributes to the [4Fe-4S] cluster binding site. Ser223, Ser224, Asn225, and Ser267 together coordinate (2E)-4-hydroxy-3-methylbut-2-enyl diphosphate. Dimethylallyl diphosphate-binding residues include Ser223, Ser224, Asn225, and Ser267. Isopentenyl diphosphate contacts are provided by Ser223, Ser224, Asn225, and Ser267.

The protein belongs to the IspH family. It depends on [4Fe-4S] cluster as a cofactor.

The catalysed reaction is isopentenyl diphosphate + 2 oxidized [2Fe-2S]-[ferredoxin] + H2O = (2E)-4-hydroxy-3-methylbut-2-enyl diphosphate + 2 reduced [2Fe-2S]-[ferredoxin] + 2 H(+). It carries out the reaction dimethylallyl diphosphate + 2 oxidized [2Fe-2S]-[ferredoxin] + H2O = (2E)-4-hydroxy-3-methylbut-2-enyl diphosphate + 2 reduced [2Fe-2S]-[ferredoxin] + 2 H(+). The protein operates within isoprenoid biosynthesis; dimethylallyl diphosphate biosynthesis; dimethylallyl diphosphate from (2E)-4-hydroxy-3-methylbutenyl diphosphate: step 1/1. It participates in isoprenoid biosynthesis; isopentenyl diphosphate biosynthesis via DXP pathway; isopentenyl diphosphate from 1-deoxy-D-xylulose 5-phosphate: step 6/6. Functionally, catalyzes the conversion of 1-hydroxy-2-methyl-2-(E)-butenyl 4-diphosphate (HMBPP) into a mixture of isopentenyl diphosphate (IPP) and dimethylallyl diphosphate (DMAPP). Acts in the terminal step of the DOXP/MEP pathway for isoprenoid precursor biosynthesis. The polypeptide is 4-hydroxy-3-methylbut-2-enyl diphosphate reductase (Chlamydia caviae (strain ATCC VR-813 / DSM 19441 / 03DC25 / GPIC) (Chlamydophila caviae)).